The primary structure comprises 281 residues: Shikimate dehydrogenase (NADP(+)) (281 aa).

Shikimate is bound by residues 14-16 (SKS) and threonine 61. Lysine 65 functions as the Proton acceptor in the catalytic mechanism. Shikimate contacts are provided by asparagine 86 and aspartate 105. Residues 130 to 134 (GAGGA), 154 to 159 (NRTAAK), and methionine 221 each bind NADP(+). Tyrosine 223 contributes to the shikimate binding site. Residue glycine 245 coordinates NADP(+).

It belongs to the shikimate dehydrogenase family. In terms of assembly, homodimer.

It carries out the reaction shikimate + NADP(+) = 3-dehydroshikimate + NADPH + H(+). The protein operates within metabolic intermediate biosynthesis; chorismate biosynthesis; chorismate from D-erythrose 4-phosphate and phosphoenolpyruvate: step 4/7. Its function is as follows. Involved in the biosynthesis of the chorismate, which leads to the biosynthesis of aromatic amino acids. Catalyzes the reversible NADPH linked reduction of 3-dehydroshikimate (DHSA) to yield shikimate (SA). This Azoarcus sp. (strain BH72) protein is Shikimate dehydrogenase (NADP(+)).